The sequence spans 382 residues: Kelch domain-containing protein 3 (382 aa).

Kelch repeat units lie at residues 25–77 (RVYS…PYMR), 88–138 (TVFL…VLGK), 139–189 (IMYI…TMLG), 191–249 (HMYV…GYNG), and 251–301 (LYIF…IVGD).

As to quaternary structure, component of a CRL2(KLHDC3) complex, also named ECS(KLHDC3) complex, composed of CUL2, Elongin BC (ELOB and ELOC), RBX1 and substrate-specific adapter KLHDC3. May form oligomers as a KLHDC3-ELOB-ELOC complex; this interaction is likely autoinhibitory for the E3 ligase complex. Expressed specifically in testis, particularly in pachytene spermatocytes.

The protein localises to the cytoplasm. It functions in the pathway protein modification; protein ubiquitination. Substrate-recognition component of a Cul2-RING (CRL2) E3 ubiquitin-protein ligase complex of the DesCEND (destruction via C-end degrons) pathway, which recognizes a C-degron located at the extreme C terminus of target proteins, leading to their ubiquitination and degradation. The C-degron recognized by the DesCEND pathway is usually a motif of less than ten residues and can be present in full-length proteins, truncated proteins or proteolytically cleaved forms. The CRL2(KLHDC3) complex specifically recognizes proteins with a glycine (Gly) at the C-terminus, leading to their ubiquitination and degradation: recognizes the C-terminal -Arg-(Xaa)n-Arg-Gly, -Arg-(Xaa)n-Lys-Gly, and -Arg-(Xaa)n-Gln-Gly degrons. The CRL2(KLHDC3) complex mediates ubiquitination and degradation of truncated SELENOV and SEPHS2 selenoproteins produced by failed UGA/Sec decoding, which end with a glycine. May be involved in meiotic recombination process. This Mus musculus (Mouse) protein is Kelch domain-containing protein 3.